The following is a 309-amino-acid chain: Homoserine O-acetyltransferase (309 aa).

Cys142 serves as the catalytic Acyl-thioester intermediate. Substrate-binding residues include Lys163 and Ser192. His235 serves as the catalytic Proton acceptor. Glu237 is an active-site residue. Residue Arg249 participates in substrate binding.

This sequence belongs to the MetA family.

It localises to the cytoplasm. The catalysed reaction is L-homoserine + acetyl-CoA = O-acetyl-L-homoserine + CoA. It participates in amino-acid biosynthesis; L-methionine biosynthesis via de novo pathway; O-acetyl-L-homoserine from L-homoserine: step 1/1. Its function is as follows. Transfers an acetyl group from acetyl-CoA to L-homoserine, forming acetyl-L-homoserine. This is Homoserine O-acetyltransferase from Petrotoga mobilis (strain DSM 10674 / SJ95).